The primary structure comprises 342 residues: Organic solute transporter alpha-like protein 2 (342 aa).

Residues 1 to 50 (MLEISPWETLVKLLTDSLLNCTGTHEDVPHAKTFLRSLTTTYIASLAVAT) are Extracellular-facing. N20 carries N-linked (GlcNAc...) asparagine glycosylation. A helical membrane pass occupies residues 51-71 (AVTVGTVCLAVLHLIYIHFYI). At 72–79 (THSSRRLH) the chain is on the cytoplasmic side. A helical transmembrane segment spans residues 80-100 (IVLLACTAPLVSLLALVAMYM). Residues 101–109 (PRVWFLSHL) lie on the Extracellular side of the membrane. The helical transmembrane segment at 110 to 130 (LSFLYFSFALWVIICLLLHIF) threads the bilayer. Over 131–176 (DGHHALVTKMMQRLQYVEIATPPFCCLFPCLPKVRLEGKKIRWCEL) the chain is Cytoplasmic. The helical transmembrane segment at 177–197 (MVMQAPIVRLFATLVSLVIYF) threads the bilayer. Topologically, residues 198-208 (EYQDQGLVPLK) are extracellular. A helical transmembrane segment spans residues 209 to 229 (VLDFITLPSLLAGIYGTHILV). Residues 230 to 243 (TTVSRMDELISYRY) lie on the Cytoplasmic side of the membrane. The chain crosses the membrane as a helical span at residues 244 to 264 (VVVFRLLDFFFMVFGLQQPVF). The Extracellular segment spans residues 265-290 (DFLARYGAFGCGTVLPAIETSFYWKN). The chain crosses the membrane as a helical span at residues 291-311 (FFTVIEAFCVTLISTVLLQPS). At 312–342 (KSSFFDKHPSCRSMSSARSTITDVDTDESTT) the chain is on the cytoplasmic side.

Belongs to the OST-alpha family.

It is found in the cell membrane. In terms of biological role, probable transporter. The sequence is that of Organic solute transporter alpha-like protein 2 (osta-2) from Caenorhabditis elegans.